Reading from the N-terminus, the 728-residue chain is MKRGSQGEAGSPQTEEPEPLFSEEDRSLRDGNALDESDSEESQYSGLEDSGTDRSDDEEDHWSEEEENPGKSPKEIIKVPNRSSKSPADSAADEEDRPNEIKEYENDSSDEEDIRNTVGNIPMEWYKDLPHIGYDLDGRKIFKPLRSKDQLEEFLDKMENPDYWRTIHDKKTGQDIKLTDEQVDLVERLQKGQFGDINYDPYQPAIDFFTHETMIHPVTNRPADKRSFIPSLIEKEKVSKLVHAIKMGWIQPRKPREDTATYYDLWAKEDPNSILGRHKMHVPAPKLPLPGHEQSYNPPPEYLMSEEERLSWEQQDPEDRKLPFLPQRFNCLRAVPGYARFIHERFERCLDLYLCPRQRKMRVNVDPEDLIPKLPKPRDLQPFPTIQSLIYKGHKDLVRCISVSPSGQWLVSGSDDCSVRFWEVSTGRCMKSVVLEGAVKSISWNPNPGLVLVAACVDRSVVLINPGLGDRLLCSATDQHISGYQPPEEEVQQPVTWEEVEGAQYSNGLRLCIKHQKEVKQVTFHARGDYFAVVLPDNGNSQVLIHQLSRRRSQNPFRKNKGQVQKVLFHPTRPFFFVATQRYVRVYNLLKQELTKKLLTNCKWVSSIAVHPAGDNLICGSYDSKLAWFDMDLSTKPYKVLRHHKKALRAVSFHKSYPLFASGSDDGSVIVCHGMVYNDLLQNPLIVPVKVLRGHAIHRDLGVLDVTFHPTQPWVFSSGADATIRLFT.

A disordered region spans residues 1–114 (MKRGSQGEAG…ENDSSDEEDI (114 aa)). Positions 55–67 (SDDEEDHWSEEEE) are enriched in acidic residues. The span at 68–77 (NPGKSPKEII) shows a compositional bias: basic and acidic residues. WD repeat units follow at residues 393–432 (GHKDLVRCISVSPSGQWLVSGSDDCSVRFWEVSTGRCMKS), 434–474 (VLEG…RLLC), 514–556 (KHQK…SQNP), 559–597 (KNKGQVQKVLFHPTRPFFFVATQRYVRVYNLLKQELTKK), 600–639 (TNCKWVSSIAVHPAGDNLICGSYDSKLAWFDMDLSTKPYK), 643–682 (HHKKALRAVSFHKSYPLFASGSDDGSVIVCHGMVYNDLLQ), and 698–728 (HRDLGVLDVTFHPTQPWVFSSGADATIRLFT).

Belongs to the WD repeat BOP1/ERB1 family. As to quaternary structure, component of the PeBoW complex, composed of bop1, pes1 and wdr12. The complex is held together by bop1, which interacts with pes1 via its N-terminal domain and with wdr12 via a high-affinity interaction between the seven-bladed beta-propeller domains of the 2 proteins. The PeBoW complex associates with the 66S pre-ribosome.

It is found in the nucleus. The protein resides in the nucleolus. The protein localises to the nucleoplasm. Its function is as follows. Component of the PeBoW complex, which is required for maturation of 28S and 5.8S ribosomal RNAs and formation of the 60S ribosome. This chain is Ribosome biogenesis protein bop1-A (bop1-a), found in Xenopus laevis (African clawed frog).